A 539-amino-acid polypeptide reads, in one-letter code: Alpha-aminoadipic semialdehyde dehydrogenase (539 aa).

Residues 1–26 constitute a mitochondrion transit peptide; sequence MWRVPRRLCVQSVKTSKLSGPWSRPA. N6-acetyllysine; alternate occurs at positions 86, 94, and 97. N6-succinyllysine; alternate occurs at positions 86, 94, and 97. Residues 192–194, Lys218, 258–259, 274–275, 274–279, and 296–297 each bind NAD(+); these read TAF, GT, GS, GSTQVG, and EL. Glu296 acts as the Proton acceptor in catalysis. Residue Cys330 is the Nucleophile of the active site. Thr331 is a (S)-2-amino-6-oxohexanoate binding site. An NAD(+)-binding site is contributed by Glu427. Lys462 is modified (N6-acetyllysine). Positions 489 and 490 each coordinate (S)-2-amino-6-oxohexanoate. Position 500 is an N6-acetyllysine (Lys500). The residue at position 537 (Lys537) is an N6-succinyllysine.

The protein belongs to the aldehyde dehydrogenase family. As to quaternary structure, homotetramer. As to expression, present in liver, kidney, brain and pancreas, and at lower levels in jejunum, duodenum, stomach and testes (at protein level).

Its subcellular location is the cytoplasm. The protein localises to the cytosol. It localises to the nucleus. It is found in the mitochondrion. It carries out the reaction nonanal + NAD(+) + H2O = nonanoate + NADH + 2 H(+). The catalysed reaction is (S)-2-amino-6-oxohexanoate + NAD(+) + H2O = L-2-aminoadipate + NADH + 2 H(+). The enzyme catalyses betaine aldehyde + NAD(+) + H2O = glycine betaine + NADH + 2 H(+). It catalyses the reaction an aldehyde + NAD(+) + H2O = a carboxylate + NADH + 2 H(+). It carries out the reaction hexanal + NAD(+) + H2O = hexanoate + NADH + 2 H(+). The catalysed reaction is octanal + NAD(+) + H2O = octanoate + NADH + 2 H(+). The enzyme catalyses (E)-non-2-enal + NAD(+) + H2O = (E)-non-2-enoate + NADH + 2 H(+). It catalyses the reaction (E)-4-hydroxynon-2-enal + NAD(+) + H2O = (E)-4-hydroxynon-2-enoate + NADH + 2 H(+). It participates in amine and polyamine biosynthesis; betaine biosynthesis via choline pathway; betaine from betaine aldehyde: step 1/1. In terms of biological role, multifunctional enzyme mediating important protective effects. Metabolizes betaine aldehyde to betaine, an important cellular osmolyte and methyl donor. Protects cells from oxidative stress by metabolizing a number of lipid peroxidation-derived aldehydes. Involved in lysine catabolism. The protein is Alpha-aminoadipic semialdehyde dehydrogenase of Mus musculus (Mouse).